The chain runs to 155 residues: Ribonuclease H (155 aa).

The 142-residue stretch at 1-142 (MLKQVEIFTD…CDELARAAAM (142 aa)) folds into the RNase H type-1 domain. Mg(2+)-binding residues include Asp-10, Glu-48, Asp-70, and Asp-134.

This sequence belongs to the RNase H family. Monomer. It depends on Mg(2+) as a cofactor.

The protein resides in the cytoplasm. The enzyme catalyses Endonucleolytic cleavage to 5'-phosphomonoester.. Its function is as follows. Endonuclease that specifically degrades the RNA of RNA-DNA hybrids. This is Ribonuclease H from Escherichia fergusonii (strain ATCC 35469 / DSM 13698 / CCUG 18766 / IAM 14443 / JCM 21226 / LMG 7866 / NBRC 102419 / NCTC 12128 / CDC 0568-73).